The primary structure comprises 333 residues: Small GTPase-like protein LIP2 (333 aa).

The small GTPase-like stretch occupies residues Asn11–Asn288. GTP-binding positions include Gly29–Ser36, Asp90–His94, and Asn160–Asp163. Residues Ser242–Pro253 are compositionally biased toward polar residues. The segment at Ser242 to Asp265 is disordered.

The protein belongs to the small GTPase superfamily.

The chain is Small GTPase-like protein LIP2 from Arabidopsis thaliana (Mouse-ear cress).